Consider the following 260-residue polypeptide: Phosphate import ATP-binding protein PstB 1 (260 aa).

The 243-residue stretch at 13–255 (ISARDLNVHY…PQHPLTQGYI (243 aa)) folds into the ABC transporter domain. 45–52 (GPSGCGKS) is an ATP binding site.

It belongs to the ABC transporter superfamily. Phosphate importer (TC 3.A.1.7) family. In terms of assembly, the complex is composed of two ATP-binding proteins (PstB), two transmembrane proteins (PstC and PstA) and a solute-binding protein (PstS).

Its subcellular location is the cell inner membrane. The catalysed reaction is phosphate(out) + ATP + H2O = ADP + 2 phosphate(in) + H(+). Its function is as follows. Part of the ABC transporter complex PstSACB involved in phosphate import. Responsible for energy coupling to the transport system. The sequence is that of Phosphate import ATP-binding protein PstB 1 from Paramagnetospirillum magneticum (strain ATCC 700264 / AMB-1) (Magnetospirillum magneticum).